Reading from the N-terminus, the 311-residue chain is Methionyl-tRNA formyltransferase (311 aa).

Position 109 to 112 (109 to 112) interacts with (6S)-5,6,7,8-tetrahydrofolate; the sequence is SLLP.

This sequence belongs to the Fmt family.

It catalyses the reaction L-methionyl-tRNA(fMet) + (6R)-10-formyltetrahydrofolate = N-formyl-L-methionyl-tRNA(fMet) + (6S)-5,6,7,8-tetrahydrofolate + H(+). Attaches a formyl group to the free amino group of methionyl-tRNA(fMet). The formyl group appears to play a dual role in the initiator identity of N-formylmethionyl-tRNA by promoting its recognition by IF2 and preventing the misappropriation of this tRNA by the elongation apparatus. The sequence is that of Methionyl-tRNA formyltransferase from Staphylococcus aureus (strain bovine RF122 / ET3-1).